Consider the following 245-residue polypeptide: Thiopurine S-methyltransferase (245 aa).

Trp-29–Phe-40 is an S-adenosyl-L-methionine binding site. Phe-40 is a binding site for substrate. Lys-58 bears the N6-acetyllysine mark. S-adenosyl-L-methionine-binding residues include Leu-69, Glu-90, and Arg-152.

The protein belongs to the class I-like SAM-binding methyltransferase superfamily. TPMT family. Monomer.

Its subcellular location is the cytoplasm. It carries out the reaction S-adenosyl-L-methionine + a thiopurine = S-adenosyl-L-homocysteine + a thiopurine S-methylether.. This chain is Thiopurine S-methyltransferase (TPMT), found in Panthera pardus (Leopard).